A 396-amino-acid chain; its full sequence is AGSYLLEELFEGHLEKECWEEICVYEEAREVFEDDETTDEFWRTYMGGSPCASQPCLNNGSCQDSIRGYACTCAPGYEGPNCAFAESECHPLRLDGCQHFCYPGPESYTCSCARGHKLGQDRRSCLPHDRCACGTLGPECCQRPQGSQQNLLPFPWQVKLTNSEGKDFCGGVLIQDNFVLTTATCSLLYANISVKTRSHFRLHVRGVHVHTRFEADTGHNDVALLDLARPVRCPDAGRPVCTADADFADSVLLPQPGVLGGWTLRGREMVPLRLRVTHVEPAECGRALNATVTTRTSCERGAAAGAARWVAGGAVVREHRGAWFLTGLLGAAPPEGPGPLLLIKVPRYALWLRQVTQQPSRASPRGDRGQGRDGEPVPGDRGGRWAPTALPPGPLV.

The Gla domain occupies 1–46; it reads AGSYLLEELFEGHLEKECWEEICVYEEAREVFEDDETTDEFWRTYM. A 4-carboxyglutamate mark is found at Glu-7, Glu-8, Glu-11, Glu-15, Glu-17, Glu-20, Glu-21, Glu-26, Glu-27, Glu-30, Glu-33, Glu-36, and Glu-40. Cysteines 18 and 23 form a disulfide. 2 consecutive EGF-like domains span residues 47-83 and 85-126; these read GGSP…PNCA and AESE…RSCL. Cystine bridges form between Cys-51–Cys-62, Cys-56–Cys-71, Cys-73–Cys-82, Cys-89–Cys-101, Cys-97–Cys-110, Cys-112–Cys-125, and Cys-169–Cys-185. Ser-53 is a glycosylation site (O-linked (Glc...) serine). Residue Asn-59 is glycosylated (N-linked (GlcNAc...) asparagine). Asp-64 bears the (3R)-3-hydroxyaspartate mark. One can recognise a Peptidase S1 domain in the interval 135 to 357; sequence TLGPECCQRP…YALWLRQVTQ (223 aa). N-linked (GlcNAc...) asparagine glycosylation is found at Asn-191 and Asn-289. The cysteines at positions 284 and 298 are disulfide-linked. The disordered stretch occupies residues 356–396; sequence TQQPSRASPRGDRGQGRDGEPVPGDRGGRWAPTALPPGPLV. Positions 364–375 are enriched in basic and acidic residues; that stretch reads PRGDRGQGRDGE. Thr-388 carries O-linked (GalNAc...) threonine glycosylation.

Belongs to the peptidase S1 family. In terms of processing, the iron and 2-oxoglutarate dependent 3-hydroxylation of aspartate and asparagine is (R) stereospecific within EGF domains. Plasma.

The protein resides in the secreted. In terms of biological role, inhibits activity of the coagulation protease factor Xa in the presence of SERPINA10, calcium and phospholipids. Appears to assist hemostasis by binding thrombin and promoting its association with phospholipid vesicles. The protein is Vitamin K-dependent protein Z (PROZ) of Bos taurus (Bovine).